Here is a 313-residue protein sequence, read N- to C-terminus: Ras-related GTP-binding protein A (313 aa).

Ser-16, Gly-17, Gly-19, Lys-20, Thr-21, Ser-22, Thr-36, Thr-42, Gly-65, and His-127 together coordinate GTP. 5 residues coordinate GDP: Gly-17, Gly-19, Lys-20, Thr-21, and Ser-22. His-127 and Asp-130 together coordinate GDP. A Glycyl lysine isopeptide (Lys-Gly) (interchain with G-Cter in ubiquitin) cross-link involves residue Lys-142. GDP contacts are provided by Leu-148 and Ile-164. A GTP-binding site is contributed by Ile-164. Glycyl lysine isopeptide (Lys-Gly) (interchain with G-Cter in ubiquitin) cross-links involve residues Lys-220, Lys-230, and Lys-244. Phosphoserine is present on Ser-309.

Belongs to the GTR/RAG GTP-binding protein family. In terms of assembly, can occur as a homodimer or as a heterodimer with RRAGC or RRAGD in a sequence-independent manner; heterodimerization stabilizes proteins of the heterodimer. The GTP-bound form of RRAGA (in complex with the GDP-bound form of RRAGC or RRAGD) interacts with RPTOR, thereby promoting recruitment of mTORC1 to the lysosomes. The Rag heterodimer interacts with SLC38A9; the probable amino acid sensor. The Rag heterodimer interacts with the Ragulator complex. The GTP-bound form of RRAGA interacts with NOL8. Component of the lysosomal folliculin complex (LFC), composed of FLCN, FNIP1 (or FNIP2), RagA/RRAGA or RagB/RRAGB GDP-bound, RagC/RRAGC or RagD/RRAGD GTP-bound, and Ragulator. Interacts with SH3BP4; the interaction with this negative regulator is most probably direct, preferentially occurs with the inactive GDP-bound form of RRAGA and is negatively regulated by amino acids. Interacts (polyubiquitinated) with TSC2. Interacts with SESN1, SESN2 and SESN3. Interacts with PIP4P1. Interacts with GPR137B. Interacts with WDR83; this interaction regulates the spatiotemporal localization of mTORC1 to the lysosomal surface. Polybiquitinated via 'Lys-63'-linked polyubiquitination by RNF152 in response to amino acid starvation: polyubiquitination of the GDP-bound inactive form by RNF152 promotes RRAGA inactivation and interaction with the GATOR1 complex. This does not affect RRAGA degradation.

It localises to the cytoplasm. Its subcellular location is the nucleus. The protein localises to the lysosome membrane. It catalyses the reaction GTP + H2O = GDP + phosphate + H(+). The activation of GTP-binding proteins is generally mediated by a guanine exchange factor (GEF), while inactivation through hydrolysis of bound GTP is catalyzed by a GTPase activating protein (GAP). The Ragulator complex functions as a GEF and promotes the active GTP-bound form. The GATOR1 complex functions as a GAP and stimulates RRAGA GTPase activity to turn it into its inactive GDP-bound form, preventing mTORC1 recruitment and activation. Functionally, guanine nucleotide-binding protein that plays a crucial role in the cellular response to amino acid availability through regulation of the mTORC1 signaling cascade. Forms heterodimeric Rag complexes with RagC/RRAGC or RagD/RRAGD and cycles between an inactive GDP-bound and an active GTP-bound form: RagA/RRAGA is in its active form when GTP-bound RagA/RRAGA forms a complex with GDP-bound RagC/RRAGC (or RagD/RRAGD) and in an inactive form when GDP-bound RagA/RRAGA heterodimerizes with GTP-bound RagC/RRAGC (or RagD/RRAGD). In its GTP-bound active form, promotes the recruitment of mTORC1 to the lysosomes and its subsequent activation by the GTPase RHEB. Involved in the RCC1/Ran-GTPase pathway. May play a direct role in a TNF-alpha signaling pathway leading to induction of cell death. The chain is Ras-related GTP-binding protein A from Bos taurus (Bovine).